The following is a 334-amino-acid chain: Tryptophan--tRNA ligase (334 aa).

ATP-binding positions include 11–13 (QPS) and 19–20 (GN). A 'HIGH' region motif is present at residues 12–20 (PSGELTIGN). Asp135 is a binding site for L-tryptophan. ATP is bound by residues 147–149 (GED), Val186, and 195–199 (KMSKS). The 'KMSKS' region motif lies at 195-199 (KMSKS).

This sequence belongs to the class-I aminoacyl-tRNA synthetase family. In terms of assembly, homodimer.

Its subcellular location is the cytoplasm. The enzyme catalyses tRNA(Trp) + L-tryptophan + ATP = L-tryptophyl-tRNA(Trp) + AMP + diphosphate + H(+). Its function is as follows. Catalyzes the attachment of tryptophan to tRNA(Trp). In Escherichia coli O157:H7, this protein is Tryptophan--tRNA ligase.